Reading from the N-terminus, the 473-residue chain is GTPase Der (473 aa).

2 EngA-type G domains span residues 3 to 167 (FTVA…GEDR) and 203 to 378 (LRVA…KVWN). GTP-binding positions include 9–16 (GRPNVGKS), 56–60 (DTAGL), 119–122 (NKSE), 209–216 (GRPNAGKS), 256–260 (DTAGM), and 321–324 (NKWD). Positions 379-463 (KRISTARLNR…PIRIHFRSPD (85 aa)) constitute a KH-like domain.

It belongs to the TRAFAC class TrmE-Era-EngA-EngB-Septin-like GTPase superfamily. EngA (Der) GTPase family. As to quaternary structure, associates with the 50S ribosomal subunit.

Its function is as follows. GTPase that plays an essential role in the late steps of ribosome biogenesis. This Rhizobium johnstonii (strain DSM 114642 / LMG 32736 / 3841) (Rhizobium leguminosarum bv. viciae) protein is GTPase Der.